The primary structure comprises 334 residues: Large ribosomal subunit protein uL3 (334 aa).

Over residues M1–R10 the composition is skewed to basic residues. The tract at residues M1–A21 is disordered.

This sequence belongs to the universal ribosomal protein uL3 family. Part of the 50S ribosomal subunit. Forms a cluster with proteins L14 and L24e.

In terms of biological role, one of the primary rRNA binding proteins, it binds directly near the 3'-end of the 23S rRNA, where it nucleates assembly of the 50S subunit. This chain is Large ribosomal subunit protein uL3, found in Methanococcus vannielii (strain ATCC 35089 / DSM 1224 / JCM 13029 / OCM 148 / SB).